The primary structure comprises 530 residues: tRNA-2-methylthio-N(6)-dimethylallyladenosine synthase (530 aa).

An MTTase N-terminal domain is found at 19 to 134 (RTYEVRTYGC…LPTLLERARH (116 aa)). [4Fe-4S] cluster is bound by residues Cys28, Cys63, Cys97, Cys171, Cys175, and Cys178. Residues 157 to 387 (RDEIASGWVS…TALQERISHE (231 aa)) form the Radical SAM core domain. The TRAM domain occupies 390-460 (QRVVGRTVEV…PFHLIADSVD (71 aa)). Residues 509–530 (VPTTASTSAPVGDGSAHPRHRA) form a disordered region.

This sequence belongs to the methylthiotransferase family. MiaB subfamily. As to quaternary structure, monomer. It depends on [4Fe-4S] cluster as a cofactor.

The protein localises to the cytoplasm. It carries out the reaction N(6)-dimethylallyladenosine(37) in tRNA + (sulfur carrier)-SH + AH2 + 2 S-adenosyl-L-methionine = 2-methylsulfanyl-N(6)-dimethylallyladenosine(37) in tRNA + (sulfur carrier)-H + 5'-deoxyadenosine + L-methionine + A + S-adenosyl-L-homocysteine + 2 H(+). Its function is as follows. Catalyzes the methylthiolation of N6-(dimethylallyl)adenosine (i(6)A), leading to the formation of 2-methylthio-N6-(dimethylallyl)adenosine (ms(2)i(6)A) at position 37 in tRNAs that read codons beginning with uridine. The polypeptide is tRNA-2-methylthio-N(6)-dimethylallyladenosine synthase (Clavibacter sepedonicus (Clavibacter michiganensis subsp. sepedonicus)).